A 315-amino-acid chain; its full sequence is Cell division protein FtsZ (315 aa).

Residues 55-57 (GTG), Glu98, Arg102, and Asp146 each bind GTP.

Belongs to the FtsZ family. In terms of assembly, homodimer. Polymerizes to form a dynamic ring structure in a strictly GTP-dependent manner. Interacts directly with several other division proteins.

It is found in the cytoplasm. In terms of biological role, essential cell division protein that forms a contractile ring structure (Z ring) at the future cell division site. The regulation of the ring assembly controls the timing and the location of cell division. One of the functions of the FtsZ ring is to recruit other cell division proteins to the septum to produce a new cell wall between the dividing cells. Binds GTP and shows GTPase activity. The chain is Cell division protein FtsZ from Wolbachia pipientis.